Here is a 168-residue protein sequence, read N- to C-terminus: Pollen allergen Che a 1 (168 aa).

An N-terminal signal peptide occupies residues 1–25 (MAKCQAVFLLVGALCVLSLAGVANA). 3 disulfides stabilise this stretch: C38-C109, C41-C153, and C62-C97. N-linked (GlcNAc...) asparagine glycosylation is present at N64.

The protein belongs to the Ole e I family.

The protein localises to the secreted. The chain is Pollen allergen Che a 1 from Chenopodium album (Fat hen).